The primary structure comprises 346 residues: Holliday junction branch migration complex subunit RuvB (346 aa).

The tract at residues 1 to 182 (MSEAARLIAP…FGIPVRLNFY (182 aa)) is large ATPase domain (RuvB-L). Residues R22, G63, K66, T67, T68, 129 to 131 (EDF), R172, Y182, and R219 contribute to the ATP site. Mg(2+) is bound at residue T67. The tract at residues 183–253 (TVEELELIVR…IADEALTRLL (71 aa)) is small ATPAse domain (RuvB-S). A head domain (RuvB-H) region spans residues 256-346 (SMGLDQLDRR…SQFRLTLEDD (91 aa)). DNA-binding residues include R292, R311, and R316.

Belongs to the RuvB family. As to quaternary structure, homohexamer. Forms an RuvA(8)-RuvB(12)-Holliday junction (HJ) complex. HJ DNA is sandwiched between 2 RuvA tetramers; dsDNA enters through RuvA and exits via RuvB. An RuvB hexamer assembles on each DNA strand where it exits the tetramer. Each RuvB hexamer is contacted by two RuvA subunits (via domain III) on 2 adjacent RuvB subunits; this complex drives branch migration. In the full resolvosome a probable DNA-RuvA(4)-RuvB(12)-RuvC(2) complex forms which resolves the HJ.

It is found in the cytoplasm. It carries out the reaction ATP + H2O = ADP + phosphate + H(+). Its function is as follows. The RuvA-RuvB-RuvC complex processes Holliday junction (HJ) DNA during genetic recombination and DNA repair, while the RuvA-RuvB complex plays an important role in the rescue of blocked DNA replication forks via replication fork reversal (RFR). RuvA specifically binds to HJ cruciform DNA, conferring on it an open structure. The RuvB hexamer acts as an ATP-dependent pump, pulling dsDNA into and through the RuvAB complex. RuvB forms 2 homohexamers on either side of HJ DNA bound by 1 or 2 RuvA tetramers; 4 subunits per hexamer contact DNA at a time. Coordinated motions by a converter formed by DNA-disengaged RuvB subunits stimulates ATP hydrolysis and nucleotide exchange. Immobilization of the converter enables RuvB to convert the ATP-contained energy into a lever motion, pulling 2 nucleotides of DNA out of the RuvA tetramer per ATP hydrolyzed, thus driving DNA branch migration. The RuvB motors rotate together with the DNA substrate, which together with the progressing nucleotide cycle form the mechanistic basis for DNA recombination by continuous HJ branch migration. Branch migration allows RuvC to scan DNA until it finds its consensus sequence, where it cleaves and resolves cruciform DNA. The protein is Holliday junction branch migration complex subunit RuvB of Rhizobium meliloti (strain 1021) (Ensifer meliloti).